A 435-amino-acid chain; its full sequence is Nuclear hormone receptor family member nhr-14 (435 aa).

The nuclear receptor DNA-binding region spans 17 to 92; the sequence is ADFCVVCGDK…DGMKPEAIQN (76 aa). NR C4-type zinc fingers lie at residues 20–40 and 56–80; these read CVVC…CNGC and CRFN…FQKC. The tract at residues 91-126 is disordered; it reads QNERDRIGSTKRRKRSGANSENNSDSEGTPSPKIEV. Residues 107–119 show a composition bias toward polar residues; sequence GANSENNSDSEGT. Residues 131–355 form the NR LBD domain; it reads VSRKLIEMLL…KRDTISPKIE (225 aa).

This sequence belongs to the nuclear hormone receptor family. In terms of tissue distribution, expressed in intestine and head neurons in young adults.

The protein localises to the nucleus. Orphan nuclear receptor. Transcriptional repressor of intestinal metal transporter smf-3 and genes of the innate immune response. Inhibits nuclear localization of transcription factor pqm-1; in response to pathogen stress, may facilitate translocation of pqm-1, leading to transcriptional activation of genes involved in innate immunity and iron uptake. This chain is Nuclear hormone receptor family member nhr-14 (nhr-14), found in Caenorhabditis elegans.